The sequence spans 689 residues: DNA-directed RNA polymerase subunit beta' (689 aa).

Cysteine 76, cysteine 78, cysteine 94, and cysteine 97 together coordinate Zn(2+). Residues aspartate 496, aspartate 498, and aspartate 500 each coordinate Mg(2+).

Belongs to the RNA polymerase beta' chain family. RpoC1 subfamily. In terms of assembly, in plastids the minimal PEP RNA polymerase catalytic core is composed of four subunits: alpha, beta, beta', and beta''. When a (nuclear-encoded) sigma factor is associated with the core the holoenzyme is formed, which can initiate transcription. The cofactor is Mg(2+). It depends on Zn(2+) as a cofactor.

The protein resides in the plastid. Its subcellular location is the chloroplast. It carries out the reaction RNA(n) + a ribonucleoside 5'-triphosphate = RNA(n+1) + diphosphate. In terms of biological role, DNA-dependent RNA polymerase catalyzes the transcription of DNA into RNA using the four ribonucleoside triphosphates as substrates. This Illicium oligandrum (Star anise) protein is DNA-directed RNA polymerase subunit beta'.